Reading from the N-terminus, the 530-residue chain is Meiosis 1 arrest protein (530 aa).

The disordered stretch occupies residues 463-530 (LHPHWESRAP…SEWEKDPSRP (68 aa)). A compositionally biased stretch (low complexity) spans 503-516 (ASKMPAASKSSSDA).

The protein localises to the cytoplasm. Required for meiosis I progression during spermatogenesis. The sequence is that of Meiosis 1 arrest protein (M1AP) from Homo sapiens (Human).